The chain runs to 1215 residues: MNHIIQDKYIPQQLLYFLAGRRCCQQFPCTFRTSEHEAFANNARSLGLRSQVVHVNGNSCVKVYKQACRHYLEEPKTLVLSSGATLNMFTLLSRKSLMGKEDLELYADLVSMKANASDLPSLHLPLPAIRPPNLRFWTEAQLNFLTAFLGHSLSDEILQSLYASRVIVYNAALCWDKSVFLPLVILDDCRNKKSNVKIMCIERQAILATYNSQRTANFFGEQLGETVGIQLPYFSAVSSSTFIIYSTAQYFLRSLTSQQFRNISHLVVNDVHLHDPYTDILLSEIRMALSSHQNLRVVLLSQMGNPKKFTDFFGEGLQLNMIKQPEVAPRVSYLNELHSCIALAGIHKGPDIYKEIPEAFRANNPRNEQMDKCLQAYGELGTDAALRPFLYAVNYDLAPVNYRHSLTGKTAVHFASELNKANHLRLLLFMGADPYIVDLFQQNAISLAAMNGNHECIDVLNSYSLHGYVVKSAKPDFVDYDLIIDIMYLLRTKPEYSPGEYSPGNILIILPTYYHIVKLNYMILSHCLTGSLQECSIFLLYDNMRNDYLQALVNASDETVKVVLATDIIESLCLKVPFKYQIDTACRLNNVYDTTSCSGDDRFEWVAKDALLRRELILQPNKGDVQCFRLISKEAYEELSETSQPSLQTMQLDKICLAVKLLSPNTIISEYLGITISPPPLINVHHAVQFLKKIDVLDDAEDVTWLGCRLMDIPVSCQLGRMLIFGILLRCLDPILTIVSSLSTADPLGIPFTEDIDNLWDRFTIYIQNSIKKERTYLSDNQFSDHFIFVRLYKEWQNRMHNRTPPLYLKDEYEFMLNGLMEQLTSIRSEIVSSLRAANLIHSRGKLSMNNLNQMSCNWHMVKAALTGGMYPNIYAVDTRKSSLKSAFSGNVSMHPNTVLRDFLEPLNISAQSFRTPWIVCNRQKSHIVYATLVVPLAVAMFSGHPRIRLSPICDSEMSLTDRNVNVFIDEWIWMVMSKATAEMVMRTRYYFFKMYHDLLKHCSELDMWRRDCEPVSQYTVLTDTLSKIFESEDGFVGFFKPPPITFLPTPQLPSLYLLSVNAHFSWAREVEENMLSKPHHFNSHFIERQFFVLYAGGDCEEFHSRNTPAFIESVLGKFVRPIDTPNRHIFVILYRKDPDMMLSISRAKFVNGVFMLQEYFRNNIPVFEILDACVSLNVQTPVFDGRLMSALIDKRVGNLIMELFAFRHHWIHKR.

One copy of the ANK repeat lies at 407-439 (TGKTAVHFASELNKANHLRLLLFMGADPYIVDL). A Phosphothreonine modification is found at Thr-898.

Part of a complex composed of at least mei-P26, bam, bgcn and Sxl; this complex is involved in translational repression of nanos mRNA. Interacts with bam (via C-terminus); the interaction is direct. Interacts with mei-P26; the interaction is direct and does not require bam. Weakly interacts with wh/wuho; this interaction may be required for the function or formation of the mei-P26-bgcn-bam-Sxl complex. Part of a complex composed of at least tut, bam and bgcn; complex formation does not require RNA. Interacts with tut; the interaction is indirect and is mediated by bam. As part of the bam-bgcn-tut complex associates with twin; may recruit the CCR4-NOT1 deadenylation complex to mRNA 3'UTRs to mediate post-transcriptional regulation of expression. Expressed in testis and in 5-8 germline stem cells of ovaries, immediately adjacent to terminal filament. Expressed in ovarian germline cells throughout the germarium (at protein level).

In terms of biological role, forms a complex with tut and bam involved in 3'UTR-dependent post-transcriptional repression of several 3'-RNA processing factors, which promotes germline stem cell lineage differentiation and mitosis-to-meiosis transition. Part of a complex with bam involved in 3'-UTR-dependent translational repression of a subset of mRNAs, including those for mei-P26, nanos and shg/E-cadherin; may act as a promiscuous RNA-binding protein tethering bam to its target mRNAs. Required for regulating the progression of gonialblast cells through transit amplification and differentiation into gametes. This chain is Protein benign gonial cell neoplasm, found in Drosophila melanogaster (Fruit fly).